Consider the following 421-residue polypeptide: Aspartokinase (421 aa).

ATP is bound at residue 7–10 (KYGG). Substrate is bound at residue 25-30 (RIVETK). Residue serine 41 participates in ATP binding. Substrate-binding positions include 45-49 (DTTDD), glutamate 74, 125-126 (LD), 151-154 (RGGS), and serine 154. Residues 174-175 (TD), 180-185 (FTADPR), and lysine 210 each bind ATP. ACT domains lie at 267–348 (VTVV…GKVS) and 349–421 (LIGA…GTGR). Residues aspartate 274, 274-279 (DVPGYA), 292-294 (NID), glutamine 298, 360-361 (VT), 374-375 (NI), and 381-382 (SE) contribute to the substrate site.

This sequence belongs to the aspartokinase family. As to quaternary structure, heterotetramer consisting of 2 isoforms Alpha (catalytic and regulation) and of a homodimer of 2 isoforms Beta (regulation).

The catalysed reaction is L-aspartate + ATP = 4-phospho-L-aspartate + ADP. It participates in amino-acid biosynthesis; L-lysine biosynthesis via DAP pathway; (S)-tetrahydrodipicolinate from L-aspartate: step 1/4. Its pathway is amino-acid biosynthesis; L-methionine biosynthesis via de novo pathway; L-homoserine from L-aspartate: step 1/3. It functions in the pathway amino-acid biosynthesis; L-threonine biosynthesis; L-threonine from L-aspartate: step 1/5. With respect to regulation, feedback inhibition by lysine and threonine. Catalyzes the phosphorylation of the beta-carboxyl group of aspartic acid with ATP to yield 4-phospho-L-aspartate, which is involved in the branched biosynthetic pathway leading to the biosynthesis of amino acids lysine, threonine, isoleucine and methionine. In Mycolicibacterium smegmatis (Mycobacterium smegmatis), this protein is Aspartokinase (ask).